Here is a 118-residue protein sequence, read N- to C-terminus: PRGPLRPLCRPINATLAAZBZACPVCITFTTSICAGYCPSMVRVLPAALPPVPZPVCTYRZLRFASIRLPGCPPGVBPMVSFPVALSCHCGPCRLSSSBCGPGRAZPLACBRSPRPGL.

Cystine bridges form between C9–C57, C23–C72, C26–C110, C34–C88, C38–C90, and C93–C100. An N-linked (GlcNAc...) asparagine glycan is attached at N13.

The protein belongs to the glycoprotein hormones subunit beta family. Heterodimer of a common alpha chain and a unique beta chain which confers biological specificity to thyrotropin, lutropin, follitropin and gonadotropin.

Its subcellular location is the secreted. In terms of biological role, promotes spermatogenesis and ovulation by stimulating the testes and ovaries to synthesize steroids. The protein is Lutropin subunit beta (LHB) of Balaenoptera acutorostrata (Common minke whale).